A 342-amino-acid polypeptide reads, in one-letter code: UDP-3-O-acylglucosamine N-acyltransferase (342 aa).

His-253 functions as the Proton acceptor in the catalytic mechanism.

This sequence belongs to the transferase hexapeptide repeat family. LpxD subfamily. Homotrimer.

The enzyme catalyses a UDP-3-O-[(3R)-3-hydroxyacyl]-alpha-D-glucosamine + a (3R)-hydroxyacyl-[ACP] = a UDP-2-N,3-O-bis[(3R)-3-hydroxyacyl]-alpha-D-glucosamine + holo-[ACP] + H(+). The protein operates within bacterial outer membrane biogenesis; LPS lipid A biosynthesis. Its function is as follows. Catalyzes the N-acylation of UDP-3-O-acylglucosamine using 3-hydroxyacyl-ACP as the acyl donor. Is involved in the biosynthesis of lipid A, a phosphorylated glycolipid that anchors the lipopolysaccharide to the outer membrane of the cell. This Rickettsia bellii (strain RML369-C) protein is UDP-3-O-acylglucosamine N-acyltransferase.